Here is a 1071-residue protein sequence, read N- to C-terminus: Exportin-1 (1071 aa).

The Importin N-terminal domain occupies 46-112 (AQEVLTHLKE…KKYVVGLIIK (67 aa)). HEAT repeat units follow at residues 217 to 240 (QNAP…PLGY), 241 to 277 (IFET…VSVS), 354 to 472 (MLLV…YVDT), 515 to 553 (RFLV…QYPR), 560 to 597 (KFLK…KCRR), and 602 to 639 (VQVG…AVGY). A necessary for interaction with Ran and nuclear export complex formation region spans residues 327-450 (CTFLKEHGQL…VREFMKDTDS (124 aa)). At serine 391 the chain carries Phosphoserine. The segment at 411 to 481 (TVLSKVRLLM…TEIIMTKKLQ (71 aa)) is necessary for interaction with RANBP3. Lysine 446 bears the N6-acetyllysine mark. The residue at position 448 (threonine 448) is a Phosphothreonine. Serine 450 bears the Phosphoserine mark. Tyrosine 454 bears the Phosphotyrosine mark. Lysine 693 is modified (N6-acetyllysine). HEAT repeat units follow at residues 775–813 (NFVP…KLGG), 885–916 (TMRN…SFYQ), 917–954 (TYFC…NLVE), and 1002–1039 (FSLN…EERE). At serine 1031 the chain carries Phosphoserine.

It belongs to the exportin family. In terms of assembly, found in a U snRNA export complex with PHAX/RNUXA, NCBP1/CBP80, NCBP2/CBP20, RAN, XPO1 and m7G-capped RNA. Component of a nuclear export receptor complex composed of KPNB1, RAN, SNUPN and XPO1. Found in a trimeric export complex with SNUPN, RAN and XPO1. Found in a nuclear export complex with RANBP3 and RAN. Found in a 60S ribosomal subunit export complex with NMD3, RAN, XPO1. Interacts with DDX3X, NMD3, NUP42, NUP88, NUP214, RANBP3 and TERT. Interacts with NEMF (via its N-terminus). Interacts with the monomeric form of BIRC5/survivin deacetylated at 'Lys-129'. Interacts with SERTAD2; the interaction translocates SERTAD2 out of the nucleus. Interacts with ATF2. Interacts with SLC35G1 and STIM1. Interacts with DCAF8. Interacts with DTNBP1 and the interaction translocates DTNBP1 out of the nucleus. Interacts with CPEB3. Interacts with HAX1. Interacts with BOK; translocates to the cytoplasm. Interacts with HSP90AB1. Interacts with LRPPRC; interacts with LRPPRC alone and also when LRPPRC is in complex with EIF4E and with EIF4E sensitivity element (4ESE)-containing mRNAs to form an EIF4E-dependent mRNA export complex.

The protein resides in the cytoplasm. It localises to the nucleus. Its subcellular location is the nucleoplasm. It is found in the cajal body. The protein localises to the nucleolus. Mediates the nuclear export of cellular proteins (cargos) bearing a leucine-rich nuclear export signal (NES) and of RNAs. In the nucleus, in association with RANBP3, binds cooperatively to the NES on its target protein and to the GTPase Ran in its active GTP-bound form. Docking of this complex to the nuclear pore complex (NPC) is mediated through binding to nucleoporins. Upon transit of a nuclear export complex into the cytoplasm, disassembling of the complex and hydrolysis of Ran-GTP to Ran-GDP (induced by RANBP1 and RANGAP1, respectively) cause release of the cargo from the export receptor. The directionality of nuclear export is thought to be conferred by an asymmetric distribution of the GTP- and GDP-bound forms of Ran between the cytoplasm and nucleus. Involved in U3 snoRNA transport from Cajal bodies to nucleoli. Binds to late precursor U3 snoRNA bearing a TMG cap. This Mus musculus (Mouse) protein is Exportin-1 (Xpo1).